A 289-amino-acid chain; its full sequence is CCR4-associated factor 16 (289 aa).

Residues 7 to 249 form the ABC transporter domain; the sequence is IEVRNLTYKF…SEVVNAKVNG (243 aa). Residue 41-48 coordinates ATP; sequence GANGAGKS.

The protein belongs to the ABC transporter superfamily. Interacts with CCR4 and SSN2.

It localises to the cytoplasm. The protein resides in the nucleus. The chain is CCR4-associated factor 16 (CAF16) from Saccharomyces cerevisiae (strain ATCC 204508 / S288c) (Baker's yeast).